The sequence spans 391 residues: MKKILYVTGSRAEYGIVRRLLTMLRETPEIQLDLAVTGMHCDNAYGNTIHIIEQDNFNIIKVVDININTTSHTHILHSMSVCLNSFGDFFSNNTYDAVMVLGDRYEIFSVAIAASMHNIPLIHIHGGEKTLANYDEFIRHSITKMSKLHLTSTEEYKKRVIQLGEKPGSVFNIGSLGAENALSLHLPNKQELELKYGSLLKRYFVVVFHPETLSTQSVNDQIDELLSAISFFKNTHDFIFIGSNADTGSDIIQRKVKYFCKEYKFRYLISIRSEDYLAMIKYSCGLIGNSSSGLIEVPSLKVATINIGDRQKGRVRGASVIDVPVEKNAIVRGINISQDEKFISVVQSSSNPYFKENALINAVRIIKDFIKSKNKDYKDFYDIPECTTSYD.

Its function is as follows. May be involved in the synthesis of polysialic acid (PSA). The protein is Polysialic acid biosynthesis protein P7 (neuC) of Escherichia coli.